A 264-amino-acid polypeptide reads, in one-letter code: Galectin-3 (264 aa).

Positions 1 to 105 are disordered; that stretch reads MADSFSLNDA…GAFPGQPGAP (105 aa). N-acetylalanine is present on A2. S6 carries the post-translational modification Phosphoserine; by CK1. A run of 8 repeats spans residues 35-43, 44-52, 53-61, 62-70, 71-79, 80-88, 89-97, and 98-107. A 9 X 9 AA tandem repeats of Y-P-G-X(3)-P-[GS]-A region spans residues 35–114; the sequence is YPGAAYPGAY…PGAYPQCSGG (80 aa). Over residues 37–46 the composition is skewed to low complexity; the sequence is GAAYPGAYPG. The span at 47-75 shows a compositional bias: pro residues; sequence QAPPGAYPGQAPPGAYPGQAPPSAYPGPT. The segment covering 76 to 105 has biased composition (low complexity); sequence APGAYPGPTAPGAYPGQPAPGAFPGQPGAP. The 9; truncated repeat unit spans residues 108-114; the sequence is YPQCSGG. The 131-residue stretch at 132–262 folds into the Galectin domain; sequence YDLPLPGGVM…DITLTSANHA (131 aa). 195–201 contacts a beta-D-galactoside; that stretch reads WGKEERQ. The residue at position 202 (S202) is a Phosphoserine. Positions 240-255 match the Nuclear export signal motif; that stretch reads KNLREISQLGISGDIT.

As to quaternary structure, probably forms homo- or heterodimers. Interacts with DMBT1. Interacts with CD6 and ALCAM. Forms a complex with the ITGA3, ITGB1 and CSPG4. Interacts with LGALS3BP, LYPD3, ZFTRAF1 and UACA. Interacts with TRIM16; this interaction mediates autophagy of damage endomembranes. Interacts with and inhibits by binding NCR3/NKp30. As to expression, the highest levels are found in activated macrophages.

Its subcellular location is the cytoplasm. The protein localises to the nucleus. The protein resides in the secreted. Its function is as follows. Galactose-specific lectin which binds IgE. May mediate with the alpha-3, beta-1 integrin the stimulation by CSPG4 of endothelial cells migration. Together with DMBT1, required for terminal differentiation of columnar epithelial cells during early embryogenesis. In the nucleus: acts as a pre-mRNA splicing factor. Involved in acute inflammatory responses including neutrophil activation and adhesion, chemoattraction of monocytes macrophages, opsonization of apoptotic neutrophils, and activation of mast cells. Together with TRIM16, coordinates the recognition of membrane damage with mobilization of the core autophagy regulators ATG16L1 and BECN1 in response to damaged endomembranes. When secreted, interacts with NK cell-activating receptor NCR3/NKp30 acting as an inhibitory ligand which antagonizes NK cell attack. This chain is Galectin-3 (Lgals3), found in Mus musculus (Mouse).